A 610-amino-acid chain; its full sequence is Dihydroxy-acid dehydratase (610 aa).

Aspartate 81 contacts Mg(2+). [2Fe-2S] cluster is bound at residue cysteine 122. Mg(2+)-binding residues include aspartate 123 and lysine 124. Lysine 124 carries the N6-carboxylysine modification. Cysteine 193 lines the [2Fe-2S] cluster pocket. Position 489 (glutamate 489) interacts with Mg(2+). Residue serine 515 is the Proton acceptor of the active site.

The protein belongs to the IlvD/Edd family. Homodimer. [2Fe-2S] cluster serves as cofactor. Requires Mg(2+) as cofactor.

The enzyme catalyses (2R)-2,3-dihydroxy-3-methylbutanoate = 3-methyl-2-oxobutanoate + H2O. It catalyses the reaction (2R,3R)-2,3-dihydroxy-3-methylpentanoate = (S)-3-methyl-2-oxopentanoate + H2O. The protein operates within amino-acid biosynthesis; L-isoleucine biosynthesis; L-isoleucine from 2-oxobutanoate: step 3/4. Its pathway is amino-acid biosynthesis; L-valine biosynthesis; L-valine from pyruvate: step 3/4. In terms of biological role, functions in the biosynthesis of branched-chain amino acids. Catalyzes the dehydration of (2R,3R)-2,3-dihydroxy-3-methylpentanoate (2,3-dihydroxy-3-methylvalerate) into 2-oxo-3-methylpentanoate (2-oxo-3-methylvalerate) and of (2R)-2,3-dihydroxy-3-methylbutanoate (2,3-dihydroxyisovalerate) into 2-oxo-3-methylbutanoate (2-oxoisovalerate), the penultimate precursor to L-isoleucine and L-valine, respectively. This chain is Dihydroxy-acid dehydratase, found in Xylella fastidiosa (strain M12).